Here is a 202-residue protein sequence, read N- to C-terminus: Protein DCV1 (202 aa).

A signal peptide spans Met1–Ser18. A run of 3 helical transmembrane segments spans residues Ile91–Ile107, Ile137–Met155, and Leu168–Phe189.

It localises to the membrane. The polypeptide is Protein DCV1 (DCV1) (Saccharomyces cerevisiae (strain ATCC 204508 / S288c) (Baker's yeast)).